Reading from the N-terminus, the 390-residue chain is 3,5-dihydroxyphenylacetyl-CoA synthase (390 aa).

Residue cysteine 173 is part of the active site.

Belongs to the thiolase-like superfamily. Chalcone/stilbene synthases family.

It carries out the reaction 4 malonyl-CoA + 4 H(+) = (3,5-dihydroxyphenyl)acetyl-CoA + 4 CO2 + 3 CoA + H2O. Its pathway is antibiotic biosynthesis; vancomycin biosynthesis. Functionally, involved in the biosynthesis of the nonproteinogenic amino acid monomer (S)-3,5-dihydroxyphenylglycine (Dpg) responsible of the production of vancomycin and teicoplanin antibiotics. Catalyzes the Claisen condensation of four molecules of malonyl-CoA to yield 3,5-dihydroxyphenylacetyl-CoA (DPA-CoA) and three free coenzyme A (CoA). DpgA requires the presence of the dehydratases DpgB and DpgD to facilitate the aromatization of the DPA-S-DgpA or DPA-S-CoA intermediate. The chain is 3,5-dihydroxyphenylacetyl-CoA synthase from Streptomyces toyocaensis.